The following is a 137-amino-acid chain: uncharacterized protein (137 aa).

This is an uncharacterized protein from Escherichia coli (strain K12).